The primary structure comprises 437 residues: ATP-dependent RNA helicase RhlB (437 aa).

Positions 9–37 (QKFADLGLQPQVTEGLEKKGFEYCTPIQA) match the Q motif motif. The Helicase ATP-binding domain occupies 40-219 (LPVLLTGQDI…FEHMHNPEHV (180 aa)). 53-60 (AQTGTGKT) provides a ligand contact to ATP. Residues 165–168 (DEAD) carry the DEAD box motif. In terms of domain architecture, Helicase C-terminal spans 245-390 (ALLQTLIEEE…VSEYDASALI (146 aa)). The segment at 397–437 (IRMRAPRVQQRRTNTGGTRSGNRKPQGRRPRQPRQSAPKQS) is disordered. Over residues 417 to 428 (GNRKPQGRRPRQ) the composition is skewed to basic residues.

This sequence belongs to the DEAD box helicase family. RhlB subfamily. In terms of assembly, component of the RNA degradosome, which is a multiprotein complex involved in RNA processing and mRNA degradation.

It is found in the cytoplasm. The enzyme catalyses ATP + H2O = ADP + phosphate + H(+). In terms of biological role, DEAD-box RNA helicase involved in RNA degradation. Has RNA-dependent ATPase activity and unwinds double-stranded RNA. This is ATP-dependent RNA helicase RhlB from Vibrio parahaemolyticus serotype O3:K6 (strain RIMD 2210633).